Reading from the N-terminus, the 381-residue chain is Hydrogenase nickel incorporation protein HupN (381 aa).

Residues 1 to 39 (MLPFSMTGLEKDHTRGVLILANAHRRSERSRTASCAGPA) are Cytoplasmic-facing. The chain crosses the membrane as a helical span at residues 40-60 (VLFGGLITANIVAWAWAFALF). Residues 61–63 (ADR) are Periplasmic-facing. A helical transmembrane segment spans residues 64-84 (PVVMATALLAWVFGLRHAVDA). Residues 85–110 (DHIAAIDNVVRSLMQTGGTPRSAGLY) lie on the Cytoplasmic side of the membrane. The helical transmembrane segment at 111–131 (FALGHSSVVVVATMLLALGVV) threads the bilayer. The Periplasmic portion of the chain corresponds to 132–149 (SLGGDGLLKEIGSFIGAS). Residues 150–170 (VSALFLLVIAAINLAIFASLW) traverse the membrane as a helical segment. Residues 171–215 (RTFRKAREQGIRDAAGLDALLAHRGILVRLLGPMFRLVTKPWHMY) lie on the Cytoplasmic side of the membrane. A helical membrane pass occupies residues 216–236 (PLGFLFGLGFDTATEIGLLSI). The Periplasmic portion of the chain corresponds to 237-243 (SASEAAR). A helical membrane pass occupies residues 244-264 (GASLADVMVFPALFAAGMALV). Over 265–292 (DTADSTLMVSAYRWAFVDPMRKLWYNLT) the chain is Cytoplasmic. A helical transmembrane segment spans residues 293-313 (ITGASVAVALFIGGIEALGLI). The Periplasmic portion of the chain corresponds to 314–333 (GNRLDLSGGVWTLIDALNES). A helical membrane pass occupies residues 334-354 (LANVGLAVIALFAIAWLLSIV). Over 355 to 381 (LYRRLIAGSSGLADTEVLECADATEAV) the chain is Cytoplasmic.

It belongs to the NiCoT transporter (TC 2.A.52) family.

The protein resides in the cell inner membrane. Its function is as follows. Involved in nickel incorporation/metabolism into the hydrogenase apoprotein. This Bradyrhizobium diazoefficiens (strain JCM 10833 / BCRC 13528 / IAM 13628 / NBRC 14792 / USDA 110) protein is Hydrogenase nickel incorporation protein HupN (hupN).